The primary structure comprises 346 residues: Pyrophosphate--fructose 6-phosphate 1-phosphotransferase (346 aa).

Gly-13 contacts diphosphate. Glu-105 is a binding site for Mg(2+). Substrate-binding positions include 127–129, Arg-164, 171–173, Glu-224, Arg-269, and 275–278; these read TID, MGR, and HLQR. Asp-129 functions as the Proton acceptor in the catalytic mechanism.

Belongs to the phosphofructokinase type A (PFKA) family. Mixed-substrate PFK group III subfamily. Homodimer. Requires Mg(2+) as cofactor.

The protein localises to the cytoplasm. It catalyses the reaction beta-D-fructose 6-phosphate + diphosphate = beta-D-fructose 1,6-bisphosphate + phosphate + H(+). Its pathway is carbohydrate degradation; glycolysis; D-glyceraldehyde 3-phosphate and glycerone phosphate from D-glucose: step 3/4. Its activity is regulated as follows. Non-allosteric. Functionally, catalyzes the phosphorylation of D-fructose 6-phosphate, the first committing step of glycolysis. Uses inorganic phosphate (PPi) as phosphoryl donor instead of ATP like common ATP-dependent phosphofructokinases (ATP-PFKs), which renders the reaction reversible, and can thus function both in glycolysis and gluconeogenesis. Consistently, PPi-PFK can replace the enzymes of both the forward (ATP-PFK) and reverse (fructose-bisphosphatase (FBPase)) reactions. This chain is Pyrophosphate--fructose 6-phosphate 1-phosphotransferase, found in Dictyoglomus thermophilum.